Reading from the N-terminus, the 182-residue chain is Tropomyosin-like protein (182 aa).

A coiled-coil region spans residues 1 to 68; the sequence is FDRYNQILDE…ELEQRRTEQQ (68 aa). Residues 32-66 are compositionally biased toward basic and acidic residues; that stretch reads DEETKKIKQEEAEMKKKIEGEASRKKLELEQRRTE. Disordered regions lie at residues 32 to 81 and 140 to 160; these read DEET…GSTD and DQPA…DAGL. The span at 140 to 153 shows a compositional bias: low complexity; sequence DQPAQAGPEPAAPA.

It is found in the cytoplasm. The protein localises to the cytoskeleton. This chain is Tropomyosin-like protein, found in Pichia angusta (Yeast).